We begin with the raw amino-acid sequence, 491 residues long: Probable glycine dehydrogenase (decarboxylating) subunit 2 (491 aa).

Position 264 is an N6-(pyridoxal phosphate)lysine (K264).

It belongs to the GcvP family. C-terminal subunit subfamily. In terms of assembly, the glycine cleavage system is composed of four proteins: P, T, L and H. In this organism, the P 'protein' is a heterodimer of two subunits. Requires pyridoxal 5'-phosphate as cofactor.

The enzyme catalyses N(6)-[(R)-lipoyl]-L-lysyl-[glycine-cleavage complex H protein] + glycine + H(+) = N(6)-[(R)-S(8)-aminomethyldihydrolipoyl]-L-lysyl-[glycine-cleavage complex H protein] + CO2. Its function is as follows. The glycine cleavage system catalyzes the degradation of glycine. The P protein binds the alpha-amino group of glycine through its pyridoxal phosphate cofactor; CO(2) is released and the remaining methylamine moiety is then transferred to the lipoamide cofactor of the H protein. In Coxiella burnetii (strain Dugway 5J108-111), this protein is Probable glycine dehydrogenase (decarboxylating) subunit 2.